Reading from the N-terminus, the 263-residue chain is Translation initiation factor 2 subunit alpha (263 aa).

Positions 12-83 (GEILIATVKQ…RKGTIDVSLK (72 aa)) constitute an S1 motif domain.

It belongs to the eIF-2-alpha family. As to quaternary structure, heterotrimer composed of an alpha, a beta and a gamma chain.

Its function is as follows. eIF-2 functions in the early steps of protein synthesis by forming a ternary complex with GTP and initiator tRNA. In Sulfurisphaera tokodaii (strain DSM 16993 / JCM 10545 / NBRC 100140 / 7) (Sulfolobus tokodaii), this protein is Translation initiation factor 2 subunit alpha.